A 509-amino-acid polypeptide reads, in one-letter code: Maturase K (509 aa).

The protein belongs to the intron maturase 2 family. MatK subfamily.

The protein localises to the plastid. Its subcellular location is the chloroplast. Functionally, usually encoded in the trnK tRNA gene intron. Probably assists in splicing its own and other chloroplast group II introns. This Nicotiana rustica (Aztec tobacco) protein is Maturase K.